We begin with the raw amino-acid sequence, 859 residues long: Heat shock protein 105 kDa (859 aa).

S2 is modified (N-acetylserine). An N6-acetyllysine modification is found at K471. Phosphoserine is present on residues S509 and S510. Disordered stretches follow at residues 515–585 and 797–859; these read MDCQ…PPEA and CEPV…MDLD. The span at 533–555 shows a compositional bias: polar residues; sequence QQDNNEAGTQPQVQTDGHQTSQS. S558 carries the phosphoserine modification. T562 carries the phosphothreonine modification. Composition is skewed to basic and acidic residues over residues 564–585 and 806–815; these read EENK…PPEA and PKIESPKLER. S810 is modified (phosphoserine). Position 816 is a phosphothreonine (T816). Positions 822 to 831 are enriched in basic and acidic residues; sequence TDKKEEDLDG. The segment covering 850–859 has biased composition (polar residues); it reads EKSSINMDLD.

Belongs to the heat shock protein 70 family. Interacts with HSPA8/HSC70. Interacts with HSPA1A (via NBD) and HSPA1B (via NBD). Post-translationally, phosphorylation on Ser-509 may be important for regulation of the HSPA8/HSC70 chaperone activity.

The protein localises to the cytoplasm. In terms of biological role, acts as a nucleotide-exchange factor (NEF) for chaperone proteins HSPA1A and HSPA1B, promoting the release of ADP from HSPA1A/B thereby triggering substrate release. Prevents the aggregation of denatured proteins in cells under severe stress, on which the ATP levels decrease markedly. Inhibits HSPA8/HSC70 ATPase and chaperone activities. This chain is Heat shock protein 105 kDa (HSPH1), found in Bos taurus (Bovine).